The sequence spans 54 residues: MIVDFYSNTLRHCETLRSQPCSLFSSLYARSFQSSCTLHVAEPSPGFHMYGCHT.

This is an uncharacterized protein from Saccharomyces cerevisiae (strain ATCC 204508 / S288c) (Baker's yeast).